The primary structure comprises 133 residues: Small ribosomal subunit protein uS8 (133 aa).

The segment at 1–28 (MANHDPISDMLTRIRNASEKRHEKTKVP) is disordered. Basic and acidic residues predominate over residues 16-26 (NASEKRHEKTK).

It belongs to the universal ribosomal protein uS8 family. As to quaternary structure, part of the 30S ribosomal subunit. Contacts proteins S5 and S12.

Its function is as follows. One of the primary rRNA binding proteins, it binds directly to 16S rRNA central domain where it helps coordinate assembly of the platform of the 30S subunit. This chain is Small ribosomal subunit protein uS8, found in Prochlorococcus marinus (strain NATL2A).